A 100-amino-acid polypeptide reads, in one-letter code: Urease subunit gamma (100 aa).

The protein belongs to the urease gamma subunit family. As to quaternary structure, heterotrimer of UreA (gamma), UreB (beta) and UreC (alpha) subunits. Three heterotrimers associate to form the active enzyme.

The protein resides in the cytoplasm. The catalysed reaction is urea + 2 H2O + H(+) = hydrogencarbonate + 2 NH4(+). Its pathway is nitrogen metabolism; urea degradation; CO(2) and NH(3) from urea (urease route): step 1/1. This is Urease subunit gamma from Stutzerimonas stutzeri (strain A1501) (Pseudomonas stutzeri).